We begin with the raw amino-acid sequence, 159 residues long: Ribosomal RNA large subunit methyltransferase H (159 aa).

S-adenosyl-L-methionine-binding positions include L76, G108, and 127–132; that span reads FSKMTF.

Belongs to the RNA methyltransferase RlmH family. As to quaternary structure, homodimer.

Its subcellular location is the cytoplasm. The enzyme catalyses pseudouridine(1915) in 23S rRNA + S-adenosyl-L-methionine = N(3)-methylpseudouridine(1915) in 23S rRNA + S-adenosyl-L-homocysteine + H(+). Its function is as follows. Specifically methylates the pseudouridine at position 1915 (m3Psi1915) in 23S rRNA. The chain is Ribosomal RNA large subunit methyltransferase H from Clostridium botulinum (strain 657 / Type Ba4).